The following is a 198-amino-acid chain: Nucleoid occlusion factor SlmA (198 aa).

Residues 9-70 (RNRREEILQA…SLIEFIEDSL (62 aa)) form the HTH tetR-type domain. A DNA-binding region (H-T-H motif) is located at residues 33 to 52 (TTAKLAANVGVSEAALYRHF). A coiled-coil region spans residues 119-144 (DRLQGRINQLFERIEMQLRQVLREKK).

This sequence belongs to the nucleoid occlusion factor SlmA family. Homodimer. Interacts with FtsZ.

It localises to the cytoplasm. It is found in the nucleoid. Required for nucleoid occlusion (NO) phenomenon, which prevents Z-ring formation and cell division over the nucleoid. Acts as a DNA-associated cell division inhibitor that binds simultaneously chromosomal DNA and FtsZ, and disrupts the assembly of FtsZ polymers. SlmA-DNA-binding sequences (SBS) are dispersed on non-Ter regions of the chromosome, preventing FtsZ polymerization at these regions. In Yersinia pseudotuberculosis serotype I (strain IP32953), this protein is Nucleoid occlusion factor SlmA.